Consider the following 638-residue polypeptide: Threonine--tRNA ligase (638 aa).

A TGS domain is found at 1-61; that stretch reads MPNIKLPDGS…ERDSELAILT (61 aa). The interval 242–533 is catalytic; sequence DHRKLGRQLD…LIEHYAGAMP (292 aa). 3 residues coordinate Zn(2+): cysteine 333, histidine 384, and histidine 510.

It belongs to the class-II aminoacyl-tRNA synthetase family. In terms of assembly, homodimer. It depends on Zn(2+) as a cofactor.

It localises to the cytoplasm. The catalysed reaction is tRNA(Thr) + L-threonine + ATP = L-threonyl-tRNA(Thr) + AMP + diphosphate + H(+). Its function is as follows. Catalyzes the attachment of threonine to tRNA(Thr) in a two-step reaction: L-threonine is first activated by ATP to form Thr-AMP and then transferred to the acceptor end of tRNA(Thr). Also edits incorrectly charged L-seryl-tRNA(Thr). In Azoarcus sp. (strain BH72), this protein is Threonine--tRNA ligase.